Reading from the N-terminus, the 271-residue chain is uncharacterized protein (271 aa).

The N-terminal stretch at 1-22 (MARELLFLACAIVIADSWPAKA) is a signal peptide.

This is an uncharacterized protein from Sinorhizobium fredii (strain NBRC 101917 / NGR234).